We begin with the raw amino-acid sequence, 169 residues long: Disulfide bond formation protein B 1 (169 aa).

Residues 1–14 (MSDDRLGLGRERRF) are Cytoplasmic-facing. A helical membrane pass occupies residues 15 to 31 (LVLLGIICLALIGGALY). Residues 32–49 (MQVVLGEAPCPLCILQRY) are Periplasmic-facing. An intrachain disulfide couples Cys41 to Cys44. A helical membrane pass occupies residues 50–64 (ALLLIALFAFIGAAM). The Cytoplasmic segment spans residues 65–71 (SSRRGVT). Residues 72 to 89 (VMETLVVICALAGAGVAG) traverse the membrane as a helical segment. Topologically, residues 90–144 (HHVYTQFYPSVSCGIDVLQPIVDSLPLAKIFPLGFQVDGFCSTPYPPILGLSLAQ) are periplasmic. Cysteines 102 and 130 form a disulfide. Residues 145–163 (WALVAFVLTVILVPLGVVR) traverse the membrane as a helical segment. Residues 164-169 (NRKKTY) lie on the Cytoplasmic side of the membrane.

It belongs to the DsbB family.

Its subcellular location is the cell inner membrane. Its function is as follows. Required for disulfide bond formation in some periplasmic proteins. Acts by oxidizing the DsbA protein. The polypeptide is Disulfide bond formation protein B 1 (Pseudomonas fluorescens (strain ATCC BAA-477 / NRRL B-23932 / Pf-5)).